The sequence spans 222 residues: ATP-dependent dethiobiotin synthetase BioD (222 aa).

12 to 17 (DVGKTF) serves as a coordination point for ATP. Thr16 serves as a coordination point for Mg(2+). Lys37 is an active-site residue. Residue Ser41 coordinates substrate. Residues Asp54 and 113–116 (EGAG) each bind ATP. Positions 54 and 113 each coordinate Mg(2+).

Belongs to the dethiobiotin synthetase family. Homodimer. Mg(2+) serves as cofactor.

It is found in the cytoplasm. It catalyses the reaction (7R,8S)-7,8-diammoniononanoate + CO2 + ATP = (4R,5S)-dethiobiotin + ADP + phosphate + 3 H(+). It participates in cofactor biosynthesis; biotin biosynthesis; biotin from 7,8-diaminononanoate: step 1/2. Functionally, catalyzes a mechanistically unusual reaction, the ATP-dependent insertion of CO2 between the N7 and N8 nitrogen atoms of 7,8-diaminopelargonic acid (DAPA, also called 7,8-diammoniononanoate) to form a ureido ring. This is ATP-dependent dethiobiotin synthetase BioD from Anoxybacillus flavithermus (strain DSM 21510 / WK1).